Here is a 188-residue protein sequence, read N- to C-terminus: Segregation and condensation protein B (188 aa).

It belongs to the ScpB family. As to quaternary structure, homodimer. Homodimerization may be required to stabilize the binding of ScpA to the Smc head domains. Component of a cohesin-like complex composed of ScpA, ScpB and the Smc homodimer, in which ScpA and ScpB bind to the head domain of Smc. The presence of the three proteins is required for the association of the complex with DNA.

It is found in the cytoplasm. Participates in chromosomal partition during cell division. May act via the formation of a condensin-like complex containing Smc and ScpA that pull DNA away from mid-cell into both cell halves. The protein is Segregation and condensation protein B of Lactococcus lactis subsp. cremoris (strain MG1363).